The primary structure comprises 243 residues: Probable septum site-determining protein MinC (243 aa).

This sequence belongs to the MinC family. As to quaternary structure, interacts with MinD and FtsZ.

Its function is as follows. Cell division inhibitor that blocks the formation of polar Z ring septums. Rapidly oscillates between the poles of the cell to destabilize FtsZ filaments that have formed before they mature into polar Z rings. Prevents FtsZ polymerization. In Agathobacter rectalis (strain ATCC 33656 / DSM 3377 / JCM 17463 / KCTC 5835 / VPI 0990) (Eubacterium rectale), this protein is Probable septum site-determining protein MinC.